The following is a 1420-amino-acid chain: Putative mediator of RNA polymerase II transcription subunit 14 (1420 aa).

Residues 1-43 (MDQNQQQQQQQQQQQQQQQQQQQQQQQQQQQQQQQQQQQQQQQ) adopt a coiled-coil conformation. 2 stretches are compositionally biased toward low complexity: residues 1–43 (MDQN…QQQQ) and 449–474 (TTSS…NNNN). Disordered stretches follow at residues 1–59 (MDQN…TTPI), 449–490 (TTSS…NPLS), 750–799 (QQDI…GYKN), and 1389–1420 (QQQQ…SSIR). A compositionally biased stretch (polar residues) spans 475 to 490 (GKPNLLSTKQSNNPLS). 2 stretches are compositionally biased toward low complexity: residues 755 to 795 (NNNN…NGNN) and 1389 to 1406 (QQQQ…QQQQ). Positions 1382–1412 (LLIQQQQQQQQQQQQQQQQQQQQQQIENNNF) form a coiled coil. The segment covering 1407–1420 (IENNNFASASSSIR) has biased composition (polar residues).

Belongs to the Mediator complex subunit 14 family. In terms of assembly, component of the Mediator complex.

It localises to the nucleus. Functionally, component of the Mediator complex, a coactivator involved in the regulated transcription of nearly all RNA polymerase II-dependent genes. Mediator functions as a bridge to convey information from gene-specific regulatory proteins to the basal RNA polymerase II transcription machinery. Mediator is recruited to promoters by direct interactions with regulatory proteins and serves as a scaffold for the assembly of a functional preinitiation complex with RNA polymerase II and the general transcription factors. The protein is Putative mediator of RNA polymerase II transcription subunit 14 (med14) of Dictyostelium discoideum (Social amoeba).